The following is a 138-amino-acid chain: Acidic phospholipase A2 BmooPLA2 (138 aa).

A signal peptide spans 1–16 (MRTLWIVAVLLLGVEG). Disulfide bonds link cysteine 42–cysteine 131, cysteine 44–cysteine 60, cysteine 59–cysteine 111, cysteine 65–cysteine 138, cysteine 66–cysteine 104, cysteine 73–cysteine 97, and cysteine 91–cysteine 102. Positions 43, 45, and 47 each coordinate Ca(2+). Residue histidine 63 is part of the active site. Aspartate 64 provides a ligand contact to Ca(2+). Residue aspartate 105 is part of the active site.

The protein belongs to the phospholipase A2 family. Group II subfamily. D49 sub-subfamily. Ca(2+) serves as cofactor. Expressed by the venom gland.

It is found in the secreted. The catalysed reaction is a 1,2-diacyl-sn-glycero-3-phosphocholine + H2O = a 1-acyl-sn-glycero-3-phosphocholine + a fatty acid + H(+). Functionally, snake venom phospholipase A2 (PLA2) that inhibits ADP- and collagen-induced platelet aggregation, has edema-inducing, anti-coagulant activity, antibacterial activity, and cytotoxic activity. In vivo, has a hypotensive effect. PLA2 catalyzes the calcium-dependent hydrolysis of the 2-acyl groups in 3-sn-phosphoglycerides. The polypeptide is Acidic phospholipase A2 BmooPLA2 (Bothrops moojeni (Lance-headed viper)).